Reading from the N-terminus, the 416-residue chain is Pentraxin fusion protein (416 aa).

The first 14 residues, 1 to 14 (MKSLLLFLKSQVFG), serve as a signal peptide directing secretion. A glycan (N-linked (GlcNAc...) asparagine) is linked at Asn-129. Residues 184–206 (GTEASDSSESVDGTEAPASPESD) form a disordered region. In terms of domain architecture, Pentraxin (PTX) spans 220 to 416 (TNKSFMFPKE…YSMIGNVAEV (197 aa)). An N-linked (GlcNAc...) asparagine glycan is attached at Asn-221. A disulfide bridge connects residues Cys-251 and Cys-311. Asp-275, Gln-353, Asp-354, and Gln-364 together coordinate Ca(2+).

It depends on Ca(2+) as a cofactor.

In Xenopus laevis (African clawed frog), this protein is Pentraxin fusion protein (pxn1).